A 108-amino-acid polypeptide reads, in one-letter code: Nucleoid-associated protein Bmul_1447/BMULJ_01796 (108 aa).

The segment at 84–108 is disordered; sequence EATSQEKMSGMTSGLPLPPGFKLPF. The segment covering 85 to 95 has biased composition (polar residues); it reads ATSQEKMSGMT. The span at 99–108 shows a compositional bias: pro residues; sequence PLPPGFKLPF.

The protein belongs to the YbaB/EbfC family. As to quaternary structure, homodimer.

It localises to the cytoplasm. The protein resides in the nucleoid. Binds to DNA and alters its conformation. May be involved in regulation of gene expression, nucleoid organization and DNA protection. The polypeptide is Nucleoid-associated protein Bmul_1447/BMULJ_01796 (Burkholderia multivorans (strain ATCC 17616 / 249)).